The sequence spans 227 residues: MAFSASLFRTKTVHTEDAFCPRSAIQAEQPPNIIDCIPVAGYEAALITNALFLLVLFVFNPLTCKGNWIKAILFYSLLLYNMILAIFLVVDTQHFVSALLLAYVVTFLVLWTADRIRLSCAVGSVLPFVDMRSSYIRVDNGNSSVVVPMNHTKHWFIRNFEQSCHCENCFYIHSSSYVECTFISRLKKSILVSVCDFSLGGNVSTVFVPSSDKTVPLHIIAPSKLYV.

A CoV 3a-like viroporin TM domain is found at alanine 27–aspartate 130. 3 helical membrane passes run valine 39–phenylalanine 59, alanine 71–aspartate 91, and glutamine 93–alanine 113. In terms of domain architecture, CoV 3a-like viroporin CD spans serine 134–leucine 191.

The protein localises to the host membrane. The chain is Non-structural protein 3d from Bat coronavirus HKU4 (BtCoV).